The sequence spans 163 residues: Nucleotide-binding protein LBJ_2391 (163 aa).

It belongs to the YajQ family.

In terms of biological role, nucleotide-binding protein. The sequence is that of Nucleotide-binding protein LBJ_2391 from Leptospira borgpetersenii serovar Hardjo-bovis (strain JB197).